The primary structure comprises 322 residues: Eukaryotic translation initiation factor 3 subunit I (322 aa).

WD repeat units lie at residues 4–43 (GHER…RLGT), 46–85 (GHQG…VIAS), 141–180 (MTES…KVVD), 184–223 (DHSA…CLKS), and 281–322 (GHFG…NIFE).

This sequence belongs to the eIF-3 subunit I family. Component of the eukaryotic translation initiation factor 3 (eIF-3) complex. The eIF-3 complex interacts with pix.

Its subcellular location is the cytoplasm. In terms of biological role, component of the eukaryotic translation initiation factor 3 (eIF-3) complex, which is involved in protein synthesis of a specialized repertoire of mRNAs and, together with other initiation factors, stimulates binding of mRNA and methionyl-tRNAi to the 40S ribosome. The eIF-3 complex specifically targets and initiates translation of a subset of mRNAs involved in cell proliferation. This is Eukaryotic translation initiation factor 3 subunit I from Drosophila yakuba (Fruit fly).